The sequence spans 563 residues: Arginine--tRNA ligase (563 aa).

The 'HIGH' region signature appears at proline 121–histidine 131.

This sequence belongs to the class-I aminoacyl-tRNA synthetase family. In terms of assembly, monomer.

The protein localises to the cytoplasm. It catalyses the reaction tRNA(Arg) + L-arginine + ATP = L-arginyl-tRNA(Arg) + AMP + diphosphate. This Streptococcus thermophilus (strain CNRZ 1066) protein is Arginine--tRNA ligase.